A 236-amino-acid chain; its full sequence is Uridylate kinase (236 aa).

10-13 lines the ATP pocket; the sequence is KLSG. The tract at residues 18 to 23 is involved in allosteric activation by GTP; that stretch reads GEDGYG. Gly-52 contributes to the UMP binding site. Residues Gly-53 and Arg-57 each contribute to the ATP site. UMP contacts are provided by residues Asp-72 and 133-140; that span reads TGNPYFTT. ATP is bound by residues Thr-160, Tyr-166, and Asp-169.

It belongs to the UMP kinase family. As to quaternary structure, homohexamer.

The protein resides in the cytoplasm. It catalyses the reaction UMP + ATP = UDP + ADP. It functions in the pathway pyrimidine metabolism; CTP biosynthesis via de novo pathway; UDP from UMP (UMPK route): step 1/1. Its activity is regulated as follows. Allosterically activated by GTP. Inhibited by UTP. In terms of biological role, catalyzes the reversible phosphorylation of UMP to UDP. The chain is Uridylate kinase from Chlorobium phaeobacteroides (strain DSM 266 / SMG 266 / 2430).